The primary structure comprises 307 residues: MMPEYHQSVMFNESMYALNIKTDGIYIDATFGRGGHAQGILNRLSKKGRLIAFDQDINAIEYANKNLVDNRLTLIHSAFSKMLSIITKQGLIGRIDGILIDLGVSSPQLENAQRGFSFRVDGPLDMRMNQTTGMSATQWLKSANEEEIANVIYQFSNEKKSRHIANKIKKYQKNHVLETTLELANIVSKVVKKQKNKHPATRTFQAIRIFINQELKQLISVLEQSKDILSKNGRLSIISFHSIEDRIVKRFIQKNSRQKTLPKGLPIIENEIEKTYLKDLGKYLTSKAEIDNNKRARSAILRVASKN.

Residues Gly34–His36, Asp54, Phe79, Asp101, and Gln108 each bind S-adenosyl-L-methionine.

It belongs to the methyltransferase superfamily. RsmH family.

It localises to the cytoplasm. It catalyses the reaction cytidine(1402) in 16S rRNA + S-adenosyl-L-methionine = N(4)-methylcytidine(1402) in 16S rRNA + S-adenosyl-L-homocysteine + H(+). Functionally, specifically methylates the N4 position of cytidine in position 1402 (C1402) of 16S rRNA. In Vesicomyosocius okutanii subsp. Calyptogena okutanii (strain HA), this protein is Ribosomal RNA small subunit methyltransferase H.